A 165-amino-acid polypeptide reads, in one-letter code: Short form salivary protein D7R1 (165 aa).

The first 21 residues, 1–21 (MFNKLHLVSLLACGLFVIAQA), serve as a signal peptide directing secretion. 3 cysteine pairs are disulfide-bonded: Cys27–Cys59, Cys40–Cys164, and Cys98–Cys117. Residues Glu28, His56, Tyr115, Asp132, and Glu135 each contribute to the serotonin site. The histamine site is built by Tyr115, Asp132, and Glu135.

This sequence belongs to the PBP/GOBP family. As to expression, female salivary gland. Not detected in female carcass without salivary glands. Not detected in male tissues.

Its subcellular location is the secreted. In terms of biological role, modulates blood feeding of female mosquitoes on vertebrate species by binding and sequestering different mediators involved in the host response. Binds serotonin and histamine. Increases blood clotting time. This Anopheles gambiae (African malaria mosquito) protein is Short form salivary protein D7R1.